The primary structure comprises 449 residues: Packaging protein 1 (449 aa).

Over residues 1 to 10 (MESRGKHRLK) the composition is skewed to basic residues. Positions 1–64 (MESRGKHRLK…SSNSILHCPP (64 aa)) are disordered. Residues 11 to 25 (KNGESKENLGEHEQA) show a composition bias toward basic and acidic residues. Residues 35 to 59 (SADSLSSPVAEPNFSSPGGRSSNSI) are compositionally biased toward polar residues. 168–175 (GPTGSGKS) contacts ATP. A DNA-binding region spans residues 437-449 (TAYSKKCDKLANK).

This sequence belongs to the adenoviridae packaging protein 1 family. As to quaternary structure, homodimer. Part of a genome packaging complex composed of packaging proteins 1, 2 and 3; this complex specifically binds to the packaging sequence on the left end of viral genomic DNA and performs packaging of the viral genome. Interacts with protein 33K.

It is found in the virion. Its subcellular location is the host nucleus. The protein localises to the host nucleoplasm. The protein resides in the host nucleolus. Component of the packaging machinery which encapsidates the viral DNA into preformed capsids and transcriptional activator of the viral major late promoter (MLP). Binds, along with packaging proteins 2 and 3, to the specific packaging sequence on the left end of viral genomic DNA and displays ATPase activity thereby providing the power stroke of the packaging machinery. The activity of packaging protein IVa2 is stimulated by protein 33K which acts as a terminase. May be the protein that pumps DNA into the capsid powered by ATP hydrolysis. Specifically binds to the 5'-CG-3' nucleotides of the repeats making up the packaging sequence. Component of the DEF-A and DEF-B transcription factors that bind downstream elements of the major late promoter (MLP), and stimulate transcription from the MLP after initiation of viral DNA replication. DEF-A is a heterodimer packaging proteins 1 and 2 and DEF-B is a homodimer of packaging protein 1. The chain is Packaging protein 1 from Mus musculus (Mouse).